The chain runs to 266 residues: Ankyrin repeat domain-containing protein 45 (266 aa).

Acidic residues-rich tracts occupy residues 1 to 11 (MESEGPPESES) and 18 to 32 (QEEENEEEEAQEPEE). Residues 1–43 (MESEGPPESESSEFFSQQEEENEEEEAQEPEETGPKNPLLQPA) are disordered. ANK repeat units follow at residues 76–105 (VGRNLLYAACMAGQSDVIRALAKYGVNLNE) and 109–138 (RGYTLLHCAAAWGRLETLKALVELDVDIEA).

It is found in the cytoplasm. Its subcellular location is the midbody. The protein resides in the midbody ring. The protein localises to the cleavage furrow. Functionally, may play a role during cell division. In Homo sapiens (Human), this protein is Ankyrin repeat domain-containing protein 45.